A 191-amino-acid polypeptide reads, in one-letter code: Protein Ves (191 aa).

This sequence belongs to the Ves family.

The polypeptide is Protein Ves (Shigella boydii serotype 18 (strain CDC 3083-94 / BS512)).